We begin with the raw amino-acid sequence, 292 residues long: Insulin-like growth factor-binding protein 3 (292 aa).

Residues 1 to 27 (MHPARPALWAAALTALTLLRGPPVARA) form the signal peptide. The IGFBP N-terminal domain maps to 36–119 (PVVRCEPCDA…LNGRGFCANA (84 aa)). Disulfide bonds link cysteine 40/cysteine 69, cysteine 43/cysteine 71, cysteine 51/cysteine 72, cysteine 60/cysteine 75, cysteine 83/cysteine 96, and cysteine 90/cysteine 116. Asparagine 118 and asparagine 137 each carry an N-linked (GlcNAc...) asparagine glycan. Disordered stretches follow at residues 128–152 (YLPS…SVES) and 178–212 (KGHA…TEYG). Position 149 is a phosphoserine (serine 149). A compositionally biased stretch (basic and acidic residues) spans 178–191 (KGHARDSQRYKVDY). The segment covering 192–203 (ESQSTDTQNFSS) has biased composition (polar residues). N-linked (GlcNAc...) asparagine glycosylation is present at asparagine 200. Residue serine 202 is modified to Phosphoserine. The 76-residue stretch at 211–286 (YGPCRREMED…DTKGKDDVHC (76 aa)) folds into the Thyroglobulin type-1 domain. 3 disulfide bridges follow: cysteine 214–cysteine 241, cysteine 252–cysteine 263, and cysteine 265–cysteine 286.

In terms of assembly, interacts with XLKD1. Binds IGF2 more than IGF1. Forms a ternary complex of about 140 to 150 kDa with IGF1 or IGF2 and a 85 kDa glycoprotein (ALS). Interacts with TMEM219. Phosphorylated by FAM20C in the extracellular medium.

It localises to the secreted. Its function is as follows. IGF-binding proteins prolong the half-life of the IGFs and have been shown to either inhibit or stimulate the growth promoting effects of the IGFs on cell culture. They alter the interaction of IGFs with their cell surface receptors. Also exhibits IGF-independent antiproliferative and apoptotic effects mediated by its receptor TMEM219/IGFBP-3R. Promotes testicular germ cell apoptosis. The chain is Insulin-like growth factor-binding protein 3 (Igfbp3) from Mus musculus (Mouse).